The chain runs to 352 residues: Photosystem II D2 protein (352 aa).

Residues 40–60 (CAYLALGGWLTGTSFVTSWYT) form a helical membrane-spanning segment. His117 is a binding site for chlorophyll a. A helical transmembrane segment spans residues 124–140 (GFMLRQFEIARLVGVRP). 2 residues coordinate pheophytin a: Gln129 and Asn142. A helical transmembrane segment spans residues 152–165 (VFVSVFLMYPLGQS). Residue His197 participates in chlorophyll a binding. The helical transmembrane segment at 207–227 (GALLCAIHGATVENTLFEDSE) threads the bilayer. Positions 214 and 261 each coordinate a plastoquinone. His214 lines the Fe cation pocket. His268 lines the Fe cation pocket. Residues 278–294 (GLWMSSIGIVGLALNLR) traverse the membrane as a helical segment.

The protein belongs to the reaction center PufL/M/PsbA/D family. PSII is composed of 1 copy each of membrane proteins PsbA, PsbB, PsbC, PsbD, PsbE, PsbF, PsbH, PsbI, PsbJ, PsbK, PsbL, PsbM, PsbT, PsbX, PsbY, PsbZ, Psb30/Ycf12, peripheral proteins PsbO, CyanoQ (PsbQ), PsbU, PsbV and a large number of cofactors. It forms dimeric complexes. Requires The D1/D2 heterodimer binds P680, chlorophylls that are the primary electron donor of PSII, and subsequent electron acceptors. It shares a non-heme iron and each subunit binds pheophytin, quinone, additional chlorophylls, carotenoids and lipids. There is also a Cl(-1) ion associated with D1 and D2, which is required for oxygen evolution. The PSII complex binds additional chlorophylls, carotenoids and specific lipids. as cofactor.

It localises to the cellular thylakoid membrane. The catalysed reaction is 2 a plastoquinone + 4 hnu + 2 H2O = 2 a plastoquinol + O2. Functionally, photosystem II (PSII) is a light-driven water:plastoquinone oxidoreductase that uses light energy to abstract electrons from H(2)O, generating O(2) and a proton gradient subsequently used for ATP formation. It consists of a core antenna complex that captures photons, and an electron transfer chain that converts photonic excitation into a charge separation. The D1/D2 (PsbA/PsbD) reaction center heterodimer binds P680, the primary electron donor of PSII as well as several subsequent electron acceptors. D2 is needed for assembly of a stable PSII complex. This chain is Photosystem II D2 protein, found in Synechococcus elongatus (strain ATCC 33912 / PCC 7942 / FACHB-805) (Anacystis nidulans R2).